Consider the following 1025-residue polypeptide: Multidrug resistance protein MdtC (1025 aa).

12 helical membrane passes run 3 to 23, 333 to 353, 360 to 380, 387 to 407, 431 to 451, 463 to 483, 528 to 548, 853 to 873, 875 to 895, 897 to 917, 953 to 973, and 984 to 1004; these read FFAL…AITL, EVEQ…FLFL, IIPA…MYLC, LSLM…IVVL, VGFT…PLLL, FAVT…TLTP, LVGV…ISIP, VILI…LYES, VHPL…LLAL, LFNA…IGIV, PIMM…LSGG, and ITIV…TPVV.

It belongs to the resistance-nodulation-cell division (RND) (TC 2.A.6) family. MdtC subfamily. In terms of assembly, part of a tripartite efflux system composed of MdtA, MdtB and MdtC. MdtC forms a heteromultimer with MdtB.

It localises to the cell inner membrane. The polypeptide is Multidrug resistance protein MdtC (Shigella sonnei (strain Ss046)).